Consider the following 511-residue polypeptide: Bifunctional purine biosynthesis protein PurH (511 aa).

Positions 1-146 (MTKRALVSVS…KNHADVTVVV (146 aa)) constitute an MGS-like domain.

Belongs to the PurH family.

It carries out the reaction (6R)-10-formyltetrahydrofolate + 5-amino-1-(5-phospho-beta-D-ribosyl)imidazole-4-carboxamide = 5-formamido-1-(5-phospho-D-ribosyl)imidazole-4-carboxamide + (6S)-5,6,7,8-tetrahydrofolate. It catalyses the reaction IMP + H2O = 5-formamido-1-(5-phospho-D-ribosyl)imidazole-4-carboxamide. Its pathway is purine metabolism; IMP biosynthesis via de novo pathway; 5-formamido-1-(5-phospho-D-ribosyl)imidazole-4-carboxamide from 5-amino-1-(5-phospho-D-ribosyl)imidazole-4-carboxamide (10-formyl THF route): step 1/1. The protein operates within purine metabolism; IMP biosynthesis via de novo pathway; IMP from 5-formamido-1-(5-phospho-D-ribosyl)imidazole-4-carboxamide: step 1/1. This is Bifunctional purine biosynthesis protein PurH from Shouchella clausii (strain KSM-K16) (Alkalihalobacillus clausii).